The following is a 430-amino-acid chain: Adenylosuccinate synthetase (430 aa).

Residues 12 to 18 (GDEGKGK) and 40 to 42 (GHT) each bind GTP. The active-site Proton acceptor is aspartate 13. Mg(2+) is bound by residues aspartate 13 and glycine 40. IMP is bound by residues 13–16 (DEGK), 38–41 (NAGH), threonine 130, arginine 144, glutamine 224, threonine 239, and arginine 303. Histidine 41 (proton donor) is an active-site residue. 299-305 (VNTGRKR) is a binding site for substrate. GTP-binding positions include arginine 305, 331–333 (KLD), and 413–415 (STS).

This sequence belongs to the adenylosuccinate synthetase family. In terms of assembly, homodimer. It depends on Mg(2+) as a cofactor.

The protein localises to the cytoplasm. It carries out the reaction IMP + L-aspartate + GTP = N(6)-(1,2-dicarboxyethyl)-AMP + GDP + phosphate + 2 H(+). It participates in purine metabolism; AMP biosynthesis via de novo pathway; AMP from IMP: step 1/2. Functionally, plays an important role in the de novo pathway of purine nucleotide biosynthesis. Catalyzes the first committed step in the biosynthesis of AMP from IMP. In Nitrobacter winogradskyi (strain ATCC 25391 / DSM 10237 / CIP 104748 / NCIMB 11846 / Nb-255), this protein is Adenylosuccinate synthetase.